A 753-amino-acid chain; its full sequence is 5-methyltetrahydropteroyltriglutamate--homocysteine methyltransferase (753 aa).

5-methyltetrahydropteroyltri-L-glutamate is bound by residues 17 to 20 (RELK) and K117. Residues 431–433 (IGS) and E484 each bind L-homocysteine. Residues 431–433 (IGS) and E484 each bind L-methionine. 5-methyltetrahydropteroyltri-L-glutamate contacts are provided by residues 515–516 (RC) and W561. Residue D599 participates in L-homocysteine binding. D599 is a binding site for L-methionine. E605 is a 5-methyltetrahydropteroyltri-L-glutamate binding site. Zn(2+) contacts are provided by H641, C643, and E665. The Proton donor role is filled by H694. C726 is a Zn(2+) binding site.

The protein belongs to the vitamin-B12 independent methionine synthase family. It depends on Zn(2+) as a cofactor.

It catalyses the reaction 5-methyltetrahydropteroyltri-L-glutamate + L-homocysteine = tetrahydropteroyltri-L-glutamate + L-methionine. It functions in the pathway amino-acid biosynthesis; L-methionine biosynthesis via de novo pathway; L-methionine from L-homocysteine (MetE route): step 1/1. Functionally, catalyzes the transfer of a methyl group from 5-methyltetrahydrofolate to homocysteine resulting in methionine formation. The polypeptide is 5-methyltetrahydropteroyltriglutamate--homocysteine methyltransferase (Shigella sonnei (strain Ss046)).